Here is a 488-residue protein sequence, read N- to C-terminus: NADH-ubiquinone oxidoreductase chain 2 (488 aa).

Helical transmembrane passes span 4 to 24, 45 to 65, 84 to 104, 111 to 131, 134 to 154, 168 to 188, 215 to 235, 252 to 272, 282 to 302, 308 to 328, 334 to 354, 375 to 395, 400 to 420, and 456 to 476; these read LFLA…LLIH, WLGL…APLL, FCQI…FDFF, AFEF…MISA, LIAM…LAAS, YLIL…MIYG, IFMG…AVPF, AFLS…VFIY, IFFF…MAQT, LAYS…CGTI, LLIG…IVLA, ILAI…PLAG, FYLF…VGVV, and LLLA…SPLF.

The protein belongs to the complex I subunit 2 family.

Its subcellular location is the mitochondrion inner membrane. The catalysed reaction is a ubiquinone + NADH + 5 H(+)(in) = a ubiquinol + NAD(+) + 4 H(+)(out). Its function is as follows. Core subunit of the mitochondrial membrane respiratory chain NADH dehydrogenase (Complex I) that is believed to belong to the minimal assembly required for catalysis. Complex I functions in the transfer of electrons from NADH to the respiratory chain. The immediate electron acceptor for the enzyme is believed to be ubiquinone. The polypeptide is NADH-ubiquinone oxidoreductase chain 2 (ND2) (Oenothera berteroana (Bertero's evening primrose)).